The chain runs to 122 residues: Large ribosomal subunit protein uL14 (122 aa).

This sequence belongs to the universal ribosomal protein uL14 family. Part of the 50S ribosomal subunit. Forms a cluster with proteins L3 and L19. In the 70S ribosome, L14 and L19 interact and together make contacts with the 16S rRNA in bridges B5 and B8.

Its function is as follows. Binds to 23S rRNA. Forms part of two intersubunit bridges in the 70S ribosome. In Shewanella loihica (strain ATCC BAA-1088 / PV-4), this protein is Large ribosomal subunit protein uL14.